Here is a 209-residue protein sequence, read N- to C-terminus: Ribosome maturation factor RimM (209 aa).

A disordered region spans residues 1 to 28 (MARRPQRPAPSGRAGAGRGAAGAAPPGP). In terms of domain architecture, PRC barrel spans 123-197 (EDEFFTADLV…RVTIAPPEDL (75 aa)).

It belongs to the RimM family. As to quaternary structure, binds ribosomal protein uS19.

It localises to the cytoplasm. An accessory protein needed during the final step in the assembly of 30S ribosomal subunit, possibly for assembly of the head region. Essential for efficient processing of 16S rRNA. May be needed both before and after RbfA during the maturation of 16S rRNA. It has affinity for free ribosomal 30S subunits but not for 70S ribosomes. This chain is Ribosome maturation factor RimM, found in Methylobacterium sp. (strain 4-46).